The sequence spans 58 residues: Isocitrate lyase (58 aa).

This sequence belongs to the isocitrate lyase/PEP mutase superfamily. Isocitrate lyase family. Homotetramer. The cofactor is Mg(2+).

It localises to the glyoxysome. The enzyme catalyses D-threo-isocitrate = glyoxylate + succinate. The protein operates within carbohydrate metabolism; glyoxylate cycle; (S)-malate from isocitrate: step 1/2. In terms of biological role, involved in storage lipid mobilization during the growth of higher plant seedling. This Helianthus annuus (Common sunflower) protein is Isocitrate lyase.